The following is a 1375-amino-acid chain: Probable GMP synthase [glutamine-hydrolyzing] (1375 aa).

Positions 7 to 119 (QILVLDFGSQ…VLEIMESSQD (113 aa)) constitute a Glutamine amidotransferase type-1; first part domain. Cys-84 functions as the Nucleophile in the catalytic mechanism. The interval 120–500 (SKDSSCFAFQ…NNATQGFKSC (381 aa)) is insert-1. N-acetyltransferase domains lie at 141–300 (LSFD…KALE) and 318–484 (VFLR…LEKK). The 80-residue stretch at 501–580 (SLFKGIKQDS…AVGICGANTC (80 aa)) folds into the Glutamine amidotransferase type-1; second part domain. Residues His-554 and Glu-556 contribute to the active site. An insert-2 region spans residues 597 to 1071 (IVYGGKAHCE…SGVANSLKIT (475 aa)). One can recognise an N-acetyltransferase 3 domain in the interval 612-765 (MQIQEAFKHI…ELIPLSIARE (154 aa)). Positions 1011–1036 (RIVDSQHTESSDIKGQSHLESSADSG) are disordered. Over residues 1014 to 1027 (DSQHTESSDIKGQS) the composition is skewed to basic and acidic residues. A GMPS ATP-PPase domain is found at 1055 to 1250 (YLEGNDRSGV…LGMPESMLMR (196 aa)). 1083–1089 (SGGVDSS) provides a ligand contact to ATP.

In terms of assembly, homodimer.

The enzyme catalyses XMP + L-glutamine + ATP + H2O = GMP + L-glutamate + AMP + diphosphate + 2 H(+). Its pathway is purine metabolism; GMP biosynthesis; GMP from XMP (L-Gln route): step 1/1. In terms of biological role, catalyzes the synthesis of GMP from XMP. The sequence is that of Probable GMP synthase [glutamine-hydrolyzing] (guaA) from Helicobacter hepaticus (strain ATCC 51449 / 3B1).